The sequence spans 242 residues: 4-hydroxy-tetrahydrodipicolinate reductase (242 aa).

NAD(+) contacts are provided by residues 8-13 (GAKGRM), 75-77 (GTT), and 99-102 (ATNM). The Proton donor/acceptor role is filled by histidine 131. Histidine 132 is a binding site for (S)-2,3,4,5-tetrahydrodipicolinate. The active-site Proton donor is lysine 135. Residue 141–142 (GT) participates in (S)-2,3,4,5-tetrahydrodipicolinate binding.

It belongs to the DapB family.

The protein resides in the cytoplasm. The enzyme catalyses (S)-2,3,4,5-tetrahydrodipicolinate + NAD(+) + H2O = (2S,4S)-4-hydroxy-2,3,4,5-tetrahydrodipicolinate + NADH + H(+). It catalyses the reaction (S)-2,3,4,5-tetrahydrodipicolinate + NADP(+) + H2O = (2S,4S)-4-hydroxy-2,3,4,5-tetrahydrodipicolinate + NADPH + H(+). It functions in the pathway amino-acid biosynthesis; L-lysine biosynthesis via DAP pathway; (S)-tetrahydrodipicolinate from L-aspartate: step 4/4. Catalyzes the conversion of 4-hydroxy-tetrahydrodipicolinate (HTPA) to tetrahydrodipicolinate. The sequence is that of 4-hydroxy-tetrahydrodipicolinate reductase from Campylobacter jejuni subsp. jejuni serotype O:2 (strain ATCC 700819 / NCTC 11168).